Consider the following 298-residue polypeptide: Heme A synthase (298 aa).

At 1–6 (MHRSLK) the chain is on the cytoplasmic side. Residues 7–27 (IFGTLTSIGMVIVLMQGALVT) traverse the membrane as a helical segment. Residues 28–62 (KTESGEGCGATWPLCFGEVIPTNPAIETIIEYSHR) are Extracellular-facing. A disulfide bridge links Cys35 with Cys42. The active site involves Glu58. His61 serves as a coordination point for heme o. The helical transmembrane segment at 63-83 (IVSGLLGAMVIILAIWAWRKL) threads the bilayer. Over 84–92 (SHIRETKVM) the chain is Cytoplasmic. Residues 93–113 (AILAVLFIIFQGLLGAGAVVF) traverse the membrane as a helical segment. The Extracellular portion of the chain corresponds to 114–117 (GQSH). The helical transmembrane segment at 118–138 (AILALHFGISAISLATVVLLT) threads the bilayer. His123 is a heme o binding site. Topologically, residues 139-158 (TLAFEDGKPNPPALIVKKGY) are cytoplasmic. The helical transmembrane segment at 159 to 179 (KGYILAVFAYCYAVIYTGAYV) threads the bilayer. Residues 180 to 209 (KHTQATLACGDFPLCNGQWIPMLSGPVGAH) are Extracellular-facing. Cys188 and Cys194 form a disulfide bridge. Residues 210–230 (FFHRVAGTLLLILLVVALIWT) traverse the membrane as a helical segment. His212 is a binding site for heme b. At 231–244 (LRKYSHYRSLVWTH) the chain is on the cytoplasmic side. A helical membrane pass occupies residues 245-265 (ILCVILVLTQYATGISIVLTG). Over 266-271 (NELFVA) the chain is Extracellular. Residues 272–292 (MMHALIVSILFTTLCYIVMIL) form a helical membrane-spanning segment. His274 lines the heme b pocket. At 293 to 298 (SRNKAV) the chain is on the cytoplasmic side.

The protein belongs to the COX15/CtaA family. Type 1 subfamily. In terms of assembly, interacts with CtaB. Requires heme b as cofactor.

It localises to the cell membrane. The catalysed reaction is Fe(II)-heme o + 2 A + H2O = Fe(II)-heme a + 2 AH2. The protein operates within porphyrin-containing compound metabolism; heme A biosynthesis; heme A from heme O: step 1/1. Functionally, catalyzes the conversion of heme O to heme A by two successive hydroxylations of the methyl group at C8. The first hydroxylation forms heme I, the second hydroxylation results in an unstable dihydroxymethyl group, which spontaneously dehydrates, resulting in the formyl group of heme A. The chain is Heme A synthase from Halalkalibacterium halodurans (strain ATCC BAA-125 / DSM 18197 / FERM 7344 / JCM 9153 / C-125) (Bacillus halodurans).